Here is a 528-residue protein sequence, read N- to C-terminus: T-complex protein 1 subunit gamma (528 aa).

Position 250 is a phosphoserine (Ser-250). A disulfide bond links Cys-364 and Cys-370.

The protein belongs to the TCP-1 chaperonin family. As to quaternary structure, heterooligomeric complex of about 850 to 900 kDa that forms two stacked rings, 12 to 16 nm in diameter.

It localises to the cytoplasm. In terms of biological role, molecular chaperone; assists the folding of proteins upon ATP hydrolysis. Known to play a role, in vitro, in the folding of actin and tubulin. This chain is T-complex protein 1 subunit gamma (cct3), found in Schizosaccharomyces pombe (strain 972 / ATCC 24843) (Fission yeast).